The primary structure comprises 394 residues: Dual-specificity RNA methyltransferase RlmN (394 aa).

Glu115 functions as the Proton acceptor in the catalytic mechanism. A Radical SAM core domain is found at 121–363 (DEGRGTLCVS…SPIRTPRGED (243 aa)). A disulfide bond links Cys128 and Cys368. Residues Cys135, Cys139, and Cys142 each coordinate [4Fe-4S] cluster. S-adenosyl-L-methionine contacts are provided by residues 194–195 (GE), Ser226, 248–250 (SFH), and Asn325. Catalysis depends on Cys368, which acts as the S-methylcysteine intermediate.

This sequence belongs to the radical SAM superfamily. RlmN family. [4Fe-4S] cluster serves as cofactor.

The protein localises to the cytoplasm. The enzyme catalyses adenosine(2503) in 23S rRNA + 2 reduced [2Fe-2S]-[ferredoxin] + 2 S-adenosyl-L-methionine = 2-methyladenosine(2503) in 23S rRNA + 5'-deoxyadenosine + L-methionine + 2 oxidized [2Fe-2S]-[ferredoxin] + S-adenosyl-L-homocysteine. It carries out the reaction adenosine(37) in tRNA + 2 reduced [2Fe-2S]-[ferredoxin] + 2 S-adenosyl-L-methionine = 2-methyladenosine(37) in tRNA + 5'-deoxyadenosine + L-methionine + 2 oxidized [2Fe-2S]-[ferredoxin] + S-adenosyl-L-homocysteine. Specifically methylates position 2 of adenine 2503 in 23S rRNA and position 2 of adenine 37 in tRNAs. m2A2503 modification seems to play a crucial role in the proofreading step occurring at the peptidyl transferase center and thus would serve to optimize ribosomal fidelity. In Roseobacter denitrificans (strain ATCC 33942 / OCh 114) (Erythrobacter sp. (strain OCh 114)), this protein is Dual-specificity RNA methyltransferase RlmN.